Here is a 179-residue protein sequence, read N- to C-terminus: MAKLHDKYQETVSPELVKKFGFTSVMQVPRIEKITLNMGVGEAVADKKVMEHALRDMTAIAGQKPVVTVARKSVAGFKIREGYPIGCKVTLRGERMWEFLERLVDIAIPRIRDFRGMSVKSFDGRGNYAMGVREQIIFPEIEYDKIDKIRGMDIVITTSAKNDEEGRALLEGFNFPFKK.

Belongs to the universal ribosomal protein uL5 family. Part of the 50S ribosomal subunit; part of the 5S rRNA/L5/L18/L25 subcomplex. Contacts the 5S rRNA and the P site tRNA. Forms a bridge to the 30S subunit in the 70S ribosome.

Functionally, this is one of the proteins that bind and probably mediate the attachment of the 5S RNA into the large ribosomal subunit, where it forms part of the central protuberance. In the 70S ribosome it contacts protein S13 of the 30S subunit (bridge B1b), connecting the 2 subunits; this bridge is implicated in subunit movement. Contacts the P site tRNA; the 5S rRNA and some of its associated proteins might help stabilize positioning of ribosome-bound tRNAs. The polypeptide is Large ribosomal subunit protein uL5 (Shewanella piezotolerans (strain WP3 / JCM 13877)).